Reading from the N-terminus, the 954-residue chain is MANSCRKLIFNIYVVFYCSAVIMPQICICSQFTSSPIDQFNKDPKAFPVATNGEIFPWHELRLPTVVIPLHYDLLIHPNLTSLDFVASEKIEVLVRDATQFIILHSKDLEILNASLQSEEDVRYKKPGENLTVLSYPAHQQIALLVPEKLRAHLRYSVAIDFQAKLADGFEGFYKSTYRTLGGETRTIAVTDFEPTEARMAFPCFDEPLFKANFSIKIRRESRHIALSNMPKVKTIELEGGLLEDHFETTVRMSTYLVAYIVCDFTSVSGTASSGVKVSIYASPDKWSQTHYALEASVKLLDFYENYFDIHYPLPKLDLVAIPDFASGAMENWGLITYRETSLLFDPKTSSTSDKLWVTKVIAHELAHQWFGNLVTMEWWNDIWLNEGFARYMELISLNITYPELQFDDSFSNTCFEVIKRDSLNSSHPISNEAKTATQIKEMFDAVSYNKGACILNMLKDFLSEETFRKGIIHYLKKFTYRNAKNDDLWHSLSNNCLEGDSTSGGFCYSDSRKTSNTLAFLRENVELKEMMATWTLQKGIPLVVVKREGRSLRLQQERFLSGVFKEDPEWGTLQERYLWHIPVTYSTSSSQAIHRHILKLKTDTVDLSEKTDWVKFNVDSSGYYIVHYEGQGWDELITLLNQNHTLLRPKDRLGLIHDAFQLVSAGRLTLDKALDLTRYLQHETSIPALLKGLEYLELFYRMVERRNISDVTENLKHYLLQYFKPVIDTQSWLDEGSVWDRMLRSTVLKLACYLNHAPCIQKATELFSQWMESSGKLNIPADVLTIVYSVGAQTTAGWNYLLEQYELSLSGAEKNKILYALSTSKHQEKLMKLIELGMEGKVIKTQDLATLLFTTARNPKGQQLAWNFVKENWTHLLKKFELGSFPIRMIISGTTSHFSSKDELQEVKLFFESLKAQGSHLDIFQIILETISKNIKWLEKNLPTLRKWLLTSI.

The Cytoplasmic segment spans residues 1 to 7 (MANSCRK). The chain crosses the membrane as a helical; Signal-anchor for type II membrane protein span at residues 8 to 28 (LIFNIYVVFYCSAVIMPQICI). Over 29–954 (CSQFTSSPID…TLRKWLLTSI (926 aa)) the chain is Lumenal. 2 N-linked (GlcNAc...) asparagine glycosylation sites follow: N79 and N113. Substrate contacts are provided by residues E194 and 328–332 (GAMEN). H364 provides a ligand contact to Zn(2+). The active-site Proton acceptor is E365. 2 residues coordinate Zn(2+): H368 and E387. N-linked (GlcNAc...) asparagine glycosylation occurs at N399. A disulfide bridge connects residues C415 and C454. N644 carries an N-linked (GlcNAc...) asparagine glycan. The cysteines at positions 753 and 760 are disulfide-linked.

This sequence belongs to the peptidase M1 family. In terms of assembly, heterodimer with ERAP1. It depends on Zn(2+) as a cofactor. N-glycosylated.

It localises to the endoplasmic reticulum membrane. Functionally, aminopeptidase that plays a central role in peptide trimming, a step required for the generation of most HLA class I-binding peptides. Peptide trimming is essential to customize longer precursor peptides to fit them to the correct length required for presentation on MHC class I molecules. Preferentially hydrolyzes the basic residues Arg and Lys. This Bos taurus (Bovine) protein is Endoplasmic reticulum aminopeptidase 2 (ERAP2).